A 145-amino-acid polypeptide reads, in one-letter code: D-aminoacyl-tRNA deacylase (145 aa).

A Gly-cisPro motif, important for rejection of L-amino acids motif is present at residues 137-138; sequence GP.

The protein belongs to the DTD family. As to quaternary structure, homodimer.

It localises to the cytoplasm. The enzyme catalyses glycyl-tRNA(Ala) + H2O = tRNA(Ala) + glycine + H(+). It carries out the reaction a D-aminoacyl-tRNA + H2O = a tRNA + a D-alpha-amino acid + H(+). Functionally, an aminoacyl-tRNA editing enzyme that deacylates mischarged D-aminoacyl-tRNAs. Also deacylates mischarged glycyl-tRNA(Ala), protecting cells against glycine mischarging by AlaRS. Acts via tRNA-based rather than protein-based catalysis; rejects L-amino acids rather than detecting D-amino acids in the active site. By recycling D-aminoacyl-tRNA to D-amino acids and free tRNA molecules, this enzyme counteracts the toxicity associated with the formation of D-aminoacyl-tRNA entities in vivo and helps enforce protein L-homochirality. In Cereibacter sphaeroides (strain KD131 / KCTC 12085) (Rhodobacter sphaeroides), this protein is D-aminoacyl-tRNA deacylase.